Consider the following 280-residue polypeptide: MATYLIGDVHGCYDELIALLHKVEFTPGKDTLWLTGDLVARGPGSLDVLRYVKSLGDSVRLVLGNHDLHLLAVFAGISRNKPKDRLTPLLEAPDADELLNWLRRQPLLQIDEEKKLVMAHAGITPQWDLKTAKECARDVEAVLSSDSYPFFLDAMYGDMPNNWSPELRGLGRLRFITNAFTRMRFCFPNGQLDMYSKESPEEAPAPLKPWFAIPGPVAEEYSIAFGHWASLEGKGTPEGIYALDTGCCWGGTLTCLRWEDKHYFVQPSNRHKDLGEAAAS.

This sequence belongs to the Ap4A hydrolase family.

The enzyme catalyses P(1),P(4)-bis(5'-adenosyl) tetraphosphate + H2O = 2 ADP + 2 H(+). Hydrolyzes diadenosine 5',5'''-P1,P4-tetraphosphate to yield ADP. The protein is Bis(5'-nucleosyl)-tetraphosphatase, symmetrical of Escherichia coli O17:K52:H18 (strain UMN026 / ExPEC).